A 51-amino-acid chain; its full sequence is Bacteriocin aureocin A53 (51 aa).

N-formylmethionine is present on methionine 1.

The protein resides in the secreted. Functionally, antibacterial peptide active against a broad range of lactic acid bacteria, L.monocytogenes and many epidemiologically unrelated strains of S.aureus involved in bovine mastitis. This is Bacteriocin aureocin A53 (aucA) from Staphylococcus aureus.